The primary structure comprises 419 residues: Subtilisin-like protease 2 (419 aa).

The first 16 residues, 1–16 (MQLLNFGLLLLPFVAG), serve as a signal peptide directing secretion. Residues 17–122 (DLAPQPEPLL…VHPDQHVYLA (106 aa)) constitute a propeptide that is removed on maturation. The 87-residue stretch at 36–122 (QYIVTLKEGL…VHPDQHVYLA (87 aa)) folds into the Inhibitor I9 domain. One can recognise a Peptidase S8 domain in the interval 131 to 419 (RWGLGYMSSK…IQERKFKLPK (289 aa)). Catalysis depends on charge relay system residues Asp-169 and His-201. 3 N-linked (GlcNAc...) asparagine glycosylation sites follow: Asn-248, Asn-261, and Asn-348. The Charge relay system role is filled by Ser-357. Residue Asn-388 is glycosylated (N-linked (GlcNAc...) asparagine).

Belongs to the peptidase S8 family.

Its subcellular location is the secreted. In terms of biological role, secreted subtilisin-like serine protease with keratinolytic activity that contributes to pathogenicity. The protein is Subtilisin-like protease 2 (SUB2) of Arthroderma benhamiae (Trichophyton mentagrophytes).